Consider the following 184-residue polypeptide: Cathelicidin-related peptide Pt_CRAMP2 (184 aa).

A signal peptide spans 1–22; that stretch reads MDGFFWKTWLVVAALAIGGTSS. Positions 23 to 150 are excised as a propeptide; that stretch reads LPHKPLTYEE…EDEKDQPRRV (128 aa). 2 disulfides stabilise this stretch: Cys-81–Cys-92 and Cys-103–Cys-120. The span at 125–144 shows a compositional bias: acidic residues; the sequence is EDEEQNQEEEEEEEKEEDEK. Positions 125-147 are disordered; sequence EDEEQNQEEEEEEEKEEDEKDQP.

The protein belongs to the cathelicidin family. As to expression, expressed by the venom gland.

The protein localises to the secreted. Its subcellular location is the target cell membrane. Functionally, potent antimicrobial peptide against most of Gram-negative bacteria, some Gram-positive bacteria (Bacillus) and some fungi (C.albicans, P.pastoris, A.terreus, A.nidulans, and C.globosum). Adopts an amphipathic alpha helical conformation, that may allow to partition into the target membrane. No hemolytic and cytotoxic activities have been observed on mammalian cells. In Pseudonaja textilis (Eastern brown snake), this protein is Cathelicidin-related peptide Pt_CRAMP2.